Here is a 401-residue protein sequence, read N- to C-terminus: MSFDLASRLASRRAEDLYRQRPLLESAQGPDVVVDGQPLLAFCSNDYLGLANHPEVIAALRAGAERWGVGGGASHLVVGHSGPHHELELALAEFTGRPRALLFSTGYMANLGAVAALVGKGDTVLEDRLNHASLLDAGLLSGARFSRYLHNDPASLAARLDKAEGNTLVVTDGVFSMDGNLADLPALAAVAQARGAWLMVDDAHGFGPLGASGGGIVEHFGLGQEQVPVLIGTLGKGFGTAGAFVAGSEELIETLIQYARPYIYTTSQPPAVACATLKSLELLRRESWRRQHLAALIARFRHGAEALGLTLMDSFTPIQPILVGGSRQAVALAGMLRARGIMVGAIRPPTVPANSARLRVTLSAAHSEAQVDRLLEALGESWRQLSSSLLAEIEAEEGDDA.

Arg19 is a substrate binding site. 106–107 (GY) serves as a coordination point for pyridoxal 5'-phosphate. Residue His131 coordinates substrate. Positions 176, 204, and 233 each coordinate pyridoxal 5'-phosphate. Lys236 is subject to N6-(pyridoxal phosphate)lysine. Thr350 serves as a coordination point for substrate.

It belongs to the class-II pyridoxal-phosphate-dependent aminotransferase family. BioF subfamily. In terms of assembly, homodimer. The cofactor is pyridoxal 5'-phosphate.

The enzyme catalyses 6-carboxyhexanoyl-[ACP] + L-alanine + H(+) = (8S)-8-amino-7-oxononanoate + holo-[ACP] + CO2. It functions in the pathway cofactor biosynthesis; biotin biosynthesis. In terms of biological role, catalyzes the decarboxylative condensation of pimeloyl-[acyl-carrier protein] and L-alanine to produce 8-amino-7-oxononanoate (AON), [acyl-carrier protein], and carbon dioxide. In Pseudomonas aeruginosa (strain ATCC 15692 / DSM 22644 / CIP 104116 / JCM 14847 / LMG 12228 / 1C / PRS 101 / PAO1), this protein is 8-amino-7-oxononanoate synthase.